The chain runs to 338 residues: Clathrin light chain 1 (338 aa).

The disordered stretch occupies residues 1-111 (MATFDDGDFP…NEMREEGFQR (111 aa)). Composition is skewed to polar residues over residues 29-47 (SEAQ…SSFN) and 61-73 (SSPN…PFES). The span at 102–111 (NEMREEGFQR) shows a compositional bias: basic and acidic residues. The segment at 102–163 (NEMREEGFQR…TIETNKTDNR (62 aa)) is involved in binding clathrin heavy chain. The stretch at 122–142 (LEEKEKKEKEMRNQIITEAED) forms a coiled coil. The tract at residues 192–338 (IPREVPNIEK…VTEAEGTKAE (147 aa)) is disordered. The segment covering 197–212 (PNIEKKRGKKDPDKKP) has biased composition (basic and acidic residues). Residues 241 to 253 (NPPPHMMPPPPPA) are compositionally biased toward pro residues. Positions 254 to 304 (KDAKDGKDAKDGKDAKTGKDGKDAKGGKDAKDLKDGKPADPKVTEEKRPSP) are enriched in basic and acidic residues.

It belongs to the clathrin light chain family. In terms of assembly, clathrin coats are formed from molecules containing 3 heavy chains and 3 light chains.

It localises to the cytoplasmic vesicle membrane. The protein localises to the membrane. It is found in the coated pit. In terms of biological role, clathrin is the major protein of the polyhedral coat of coated pits and vesicles. This is Clathrin light chain 1 from Arabidopsis thaliana (Mouse-ear cress).